Reading from the N-terminus, the 384-residue chain is Cytochrome b (384 aa).

4 consecutive transmembrane segments (helical) span residues 32–52 (FGSLLGVCLVMQLCTGMFLAM), 76–98 (WLLRYAHSNGAGFFFMFVYLHMA), 113–133 (LWNMGVMMFLLMMMTAFMGYC), and 179–199 (FFSLHYLLPFVIAGICCLHLL). Heme b contacts are provided by H82 and H96. Heme b is bound by residues H183 and H197. A ubiquinone is bound at residue H202. A run of 4 helical transmembrane segments spans residues 225–245 (FLFKDTVTIFAFLFVYFFLIS), 289–309 (MMGVLAMLFAILILFVLPFVD), 321–341 (LSKILFGFFCVNFILLGLIGA), and 348–368 (YIIIGQLATIFYFSYFMILLP).

It belongs to the cytochrome b family. In terms of assembly, fungal cytochrome b-c1 complex contains 10 subunits; 3 respiratory subunits, 2 core proteins and 5 low-molecular weight proteins. Cytochrome b-c1 complex is a homodimer. Heme b is required as a cofactor.

The protein localises to the mitochondrion inner membrane. Its function is as follows. Component of the ubiquinol-cytochrome c reductase complex (complex III or cytochrome b-c1 complex) that is part of the mitochondrial respiratory chain. The b-c1 complex mediates electron transfer from ubiquinol to cytochrome c. Contributes to the generation of a proton gradient across the mitochondrial membrane that is then used for ATP synthesis. This Starmerella bacillaris (Yeast) protein is Cytochrome b (COB).